We begin with the raw amino-acid sequence, 618 residues long: Indolepyruvate oxidoreductase subunit IorA (618 aa).

4Fe-4S ferredoxin-type domains are found at residues 558-587 (GRPMAVDGEKCDLCLECIRDLACPAMVTRE) and 588-617 (GEVFIDPLKCRGCSVCLQICPAGAIKPEGK). Residues Cys-568, Cys-571, Cys-574, Cys-580, Cys-597, Cys-600, Cys-603, and Cys-607 each coordinate [4Fe-4S] cluster.

Heterodimer of the IorA and IorB subunits. Requires [4Fe-4S] cluster as cofactor.

The catalysed reaction is indole-3-pyruvate + 2 oxidized [2Fe-2S]-[ferredoxin] + CoA = (indol-3-yl)acetyl-CoA + 2 reduced [2Fe-2S]-[ferredoxin] + CO2 + H(+). Its function is as follows. Catalyzes the ferredoxin-dependent oxidative decarboxylation of arylpyruvates. In Methanothermobacter thermautotrophicus (strain ATCC 29096 / DSM 1053 / JCM 10044 / NBRC 100330 / Delta H) (Methanobacterium thermoautotrophicum), this protein is Indolepyruvate oxidoreductase subunit IorA (iorA).